The sequence spans 154 residues: Small ribosomal subunit protein uS15 (154 aa).

Basic residues predominate over residues 1-14; sequence MAPVPHRSRHKKGR. Residues 1–24 are disordered; sequence MAPVPHRSRHKKGRSGSVRPAHPT.

It belongs to the universal ribosomal protein uS15 family. As to quaternary structure, part of the 30S ribosomal subunit.

The sequence is that of Small ribosomal subunit protein uS15 from Pyrobaculum arsenaticum (strain DSM 13514 / JCM 11321 / PZ6).